A 105-amino-acid polypeptide reads, in one-letter code: Small ribosomal subunit protein uS10 (105 aa).

The protein belongs to the universal ribosomal protein uS10 family. As to quaternary structure, part of the 30S ribosomal subunit.

In terms of biological role, involved in the binding of tRNA to the ribosomes. This chain is Small ribosomal subunit protein uS10, found in Bdellovibrio bacteriovorus (strain ATCC 15356 / DSM 50701 / NCIMB 9529 / HD100).